The sequence spans 64 residues: Temporin-ALe (64 aa).

The first 22 residues, 1 to 22 (MFTLKKSLLLLFFLGTINLSLC), serve as a signal peptide directing secretion. A propeptide spanning residues 23–47 (EQERNAEEERRDEPDERNAEVEKRF) is cleaved from the precursor. At Leu-62 the chain carries Leucine amide.

Expressed by the skin glands.

It is found in the secreted. Its function is as follows. Antimicrobial peptide with activity against Gram-positive and Gram-negative bacteria and against fungi. Has been tested against S.aureus (MIC=1.25 ug/mL), B.pumilus (MIC=5.0 ug/mL), B.cereus (MIC=15.0 ug/mL), E.coli (MIC=1.25 ug/mL), B.dysenteriae (MIC=5.0 ug/mL), A.cacoaceticus (MIC=15.0 ug/mL), P.aeruginosa (MIC=5.0 ug/mL) and C.albicans (MIC=1.25 ug/mL). Also shows a weak hemolytic activity. This chain is Temporin-ALe, found in Amolops loloensis (Lolokou Sucker Frog).